The primary structure comprises 526 residues: MSRKTVFPKVMCTQHPDSASKYIATQEEPGEAIEAAQIFGCDEYMPDYEGKATPYHQNVQVVSKFIEETDLIPGKDIIITPRAPSAVQENQFRQLMVMMSIAEANYNALEYSDVQAINEFVHPMTDSVREIIGAQQHMVDVSELAKKEFGFSMEVPCIIPLIEDAPALLHAKELAENTLFAWKGHFGTVPDKFRVFLGKSDSALSFGHVASTLSCKYAINGICELNSELDTQTGIIFGAGTLPFRGHLDLMNAENFFKEYRGVGTITLQSALRYSHKKGDAESLVKLAKARLPETPELFSAEEKEEIINLIGIFGASYSRIIRQLAPTINRIADLLPQQRDRLMHKGTGGYSRSAPDISGLVNLCRTDIGKELEASMPAEDLQLPRAIKFTGALYSIGLPPEFIGTGRALEEAREKLGEAACENLLTKYFPSLAGDLNFASEYLDLNVASRFLSSECLKEVSKDLDILHGAFALETSPEPSYRILVEMMQPDLLQAGSRGNCMDEEVSQLVCSTLTKMGKIRKALG.

Belongs to the PEPCase type 2 family. As to quaternary structure, homotetramer. The cofactor is Mg(2+).

The enzyme catalyses oxaloacetate + phosphate = phosphoenolpyruvate + hydrogencarbonate. Functionally, catalyzes the irreversible beta-carboxylation of phosphoenolpyruvate (PEP) to form oxaloacetate (OAA), a four-carbon dicarboxylic acid source for the tricarboxylic acid cycle. This is Phosphoenolpyruvate carboxylase from Methanosarcina barkeri (strain Fusaro / DSM 804).